A 334-amino-acid polypeptide reads, in one-letter code: Probable tRNA pseudouridine synthase B (334 aa).

Catalysis depends on aspartate 82, which acts as the Nucleophile. A PUA domain is found at 250 to 325 (LPKVWIRDSA…IAVDVDKVFM (76 aa)).

This sequence belongs to the pseudouridine synthase TruB family. Type 2 subfamily.

The enzyme catalyses uridine(55) in tRNA = pseudouridine(55) in tRNA. Its function is as follows. Could be responsible for synthesis of pseudouridine from uracil-55 in the psi GC loop of transfer RNAs. The protein is Probable tRNA pseudouridine synthase B of Thermococcus gammatolerans (strain DSM 15229 / JCM 11827 / EJ3).